A 257-amino-acid chain; its full sequence is Imidazole glycerol phosphate synthase subunit HisF (257 aa).

Catalysis depends on residues D11 and D130.

Belongs to the HisA/HisF family. In terms of assembly, heterodimer of HisH and HisF.

It localises to the cytoplasm. The enzyme catalyses 5-[(5-phospho-1-deoxy-D-ribulos-1-ylimino)methylamino]-1-(5-phospho-beta-D-ribosyl)imidazole-4-carboxamide + L-glutamine = D-erythro-1-(imidazol-4-yl)glycerol 3-phosphate + 5-amino-1-(5-phospho-beta-D-ribosyl)imidazole-4-carboxamide + L-glutamate + H(+). Its pathway is amino-acid biosynthesis; L-histidine biosynthesis; L-histidine from 5-phospho-alpha-D-ribose 1-diphosphate: step 5/9. Functionally, IGPS catalyzes the conversion of PRFAR and glutamine to IGP, AICAR and glutamate. The HisF subunit catalyzes the cyclization activity that produces IGP and AICAR from PRFAR using the ammonia provided by the HisH subunit. The polypeptide is Imidazole glycerol phosphate synthase subunit HisF (Prochlorococcus marinus (strain MIT 9515)).